The following is a 122-amino-acid chain: Large ribosomal subunit protein uL18 (122 aa).

Over residues 1 to 16 (MFKKVDRKASRQKKQM) the composition is skewed to basic residues. The interval 1–29 (MFKKVDRKASRQKKQMSIRNKISGTPERP) is disordered.

The protein belongs to the universal ribosomal protein uL18 family. In terms of assembly, part of the 50S ribosomal subunit; part of the 5S rRNA/L5/L18/L25 subcomplex. Contacts the 5S and 23S rRNAs.

In terms of biological role, this is one of the proteins that bind and probably mediate the attachment of the 5S RNA into the large ribosomal subunit, where it forms part of the central protuberance. This chain is Large ribosomal subunit protein uL18, found in Fusobacterium nucleatum subsp. nucleatum (strain ATCC 25586 / DSM 15643 / BCRC 10681 / CIP 101130 / JCM 8532 / KCTC 2640 / LMG 13131 / VPI 4355).